Consider the following 196-residue polypeptide: Glycerol-3-phosphate acyltransferase (196 aa).

The next 5 helical transmembrane spans lie at 2-22 (GWWL…SYLI), 51-71 (VVGG…VFIA), 80-100 (LVSL…FMKF), 112-132 (IIFC…LVIV), and 137-156 (YASL…GYLF).

Belongs to the PlsY family. In terms of assembly, probably interacts with PlsX.

It localises to the cell inner membrane. It carries out the reaction an acyl phosphate + sn-glycerol 3-phosphate = a 1-acyl-sn-glycero-3-phosphate + phosphate. The protein operates within lipid metabolism; phospholipid metabolism. In terms of biological role, catalyzes the transfer of an acyl group from acyl-phosphate (acyl-PO(4)) to glycerol-3-phosphate (G3P) to form lysophosphatidic acid (LPA). This enzyme utilizes acyl-phosphate as fatty acyl donor, but not acyl-CoA or acyl-ACP. In Thermotoga petrophila (strain ATCC BAA-488 / DSM 13995 / JCM 10881 / RKU-1), this protein is Glycerol-3-phosphate acyltransferase.